The primary structure comprises 775 residues: Endothelin-converting enzyme-like 1 (775 aa).

Over 1–59 the chain is Cytoplasmic; the sequence is MEPPYSLTAHYDEFQEVKYVSRCGAGGARGASLPPGFPLGAARSATGARSGLPRWNRRE. The helical; Signal-anchor for type II membrane protein transmembrane segment at 60–82 threads the bilayer; that stretch reads VCLLSGLVFAAGLCAILAAMLAL. Residues 83-775 are Lumenal-facing; that stretch reads KYLGPVAAGG…MNPAHKCSVW (693 aa). The Peptidase M13 domain occupies 98-775; sequence GCPERKAFAR…MNPAHKCSVW (678 aa). Cystine bridges form between Cys-123/Cys-760, Cys-131/Cys-720, Cys-187/Cys-441, and Cys-649/Cys-772. Asn-255 and Asn-322 each carry an N-linked (GlcNAc...) asparagine glycan. His-612 contributes to the Zn(2+) binding site. Glu-613 is an active-site residue. His-616 is a binding site for Zn(2+). An N-linked (GlcNAc...) asparagine glycan is attached at Asn-656. Residue Glu-672 participates in Zn(2+) binding. Asp-676 functions as the Proton donor in the catalytic mechanism.

Belongs to the peptidase M13 family. The cofactor is Zn(2+). In terms of processing, N-glycosylated. As to expression, highly expressed in the CNS, in particular in putamen, spinal cord, medulla and subthalamic nucleus. A strong signal was also detected in uterine subepithelial cells and around renal blood vessels. Detected at lower levels in amygdala, caudate, thalamus, pancreas and skeletal muscle. Detected at very low levels in substantia nigra, cerebellum, cortex, corpus callosum and hippocampus.

It is found in the membrane. May contribute to the degradation of peptide hormones and be involved in the inactivation of neuronal peptides. The chain is Endothelin-converting enzyme-like 1 (ECEL1) from Homo sapiens (Human).